A 62-amino-acid polypeptide reads, in one-letter code: MSIIFQLALIALVLFSFVMVIGVPVAYASPQNWNQSKPLLYLGSAIWAILVVIVAILNFFVI.

The next 2 helical transmembrane spans lie at 8 to 28 (ALIALVLFSFVMVIGVPVAYA) and 41 to 61 (YLGSAIWAILVVIVAILNFFV).

Belongs to the PsbZ family. As to quaternary structure, PSII is composed of 1 copy each of membrane proteins PsbA, PsbB, PsbC, PsbD, PsbE, PsbF, PsbH, PsbI, PsbJ, PsbK, PsbL, PsbM, PsbT, PsbX, PsbY, PsbZ, Psb30/Ycf12, peripheral proteins PsbO, CyanoQ (PsbQ), PsbU, PsbV and a large number of cofactors. It forms dimeric complexes.

It localises to the cellular thylakoid membrane. In terms of biological role, may control the interaction of photosystem II (PSII) cores with the light-harvesting antenna, regulates electron flow through the 2 photosystem reaction centers. PSII is a light-driven water plastoquinone oxidoreductase, using light energy to abstract electrons from H(2)O, generating a proton gradient subsequently used for ATP formation. The protein is Photosystem II reaction center protein Z of Rippkaea orientalis (strain PCC 8801 / RF-1) (Cyanothece sp. (strain PCC 8801)).